Reading from the N-terminus, the 121-residue chain is Large ribosomal subunit protein bL12 (121 aa).

Belongs to the bacterial ribosomal protein bL12 family. Homodimer. Part of the ribosomal stalk of the 50S ribosomal subunit. Forms a multimeric L10(L12)X complex, where L10 forms an elongated spine to which 2 to 4 L12 dimers bind in a sequential fashion. Binds GTP-bound translation factors.

In terms of biological role, forms part of the ribosomal stalk which helps the ribosome interact with GTP-bound translation factors. Is thus essential for accurate translation. This chain is Large ribosomal subunit protein bL12, found in Acinetobacter baylyi (strain ATCC 33305 / BD413 / ADP1).